The following is a 145-amino-acid chain: Small ribosomal subunit protein eS12A (145 aa).

It belongs to the eukaryotic ribosomal protein eS12 family. Component of the small ribosomal subunit (SSU). Mature yeast ribosomes consist of a small (40S) and a large (60S) subunit. The 40S small subunit contains 1 molecule of ribosomal RNA (18S rRNA) and at least 33 different proteins. The large 60S subunit contains 3 rRNA molecules (25S, 5.8S and 5S rRNA) and at least 46 different proteins.

The protein localises to the cytoplasm. Functionally, component of the ribosome, a large ribonucleoprotein complex responsible for the synthesis of proteins in the cell. The small ribosomal subunit (SSU) binds messenger RNAs (mRNAs) and translates the encoded message by selecting cognate aminoacyl-transfer RNA (tRNA) molecules. The large subunit (LSU) contains the ribosomal catalytic site termed the peptidyl transferase center (PTC), which catalyzes the formation of peptide bonds, thereby polymerizing the amino acids delivered by tRNAs into a polypeptide chain. The nascent polypeptides leave the ribosome through a tunnel in the LSU and interact with protein factors that function in enzymatic processing, targeting, and the membrane insertion of nascent chains at the exit of the ribosomal tunnel. This Schizosaccharomyces pombe (strain 972 / ATCC 24843) (Fission yeast) protein is Small ribosomal subunit protein eS12A (rps1201).